The primary structure comprises 183 residues: MASRAGPRATGTDGSDYQHRERVASHYQMSVALKSEIKKLNIAHAVVWFLVAAQVLVSQLNLVSHKVVASPYQWEYTYLLSIIPTVFSFMALPKNNISYLVISMISGGLFCIGPILYGGMEMFPVAQQLYRHGKAYRFIFGFSAVSIMYLVLIISVQVHGWQIYYSKKLLDAWFTNTQDKKKK.

Residues 1-39 (MASRAGPRATGTDGSDYQHRERVASHYQMSVALKSEIKK) lie on the Cytoplasmic side of the membrane. Residues 40-60 (LNIAHAVVWFLVAAQVLVSQL) traverse the membrane as a helical segment. At 61-71 (NLVSHKVVASP) the chain is on the lumenal side. Residues 72–92 (YQWEYTYLLSIIPTVFSFMAL) form a helical membrane-spanning segment. The Cytoplasmic segment spans residues 93-99 (PKNNISY). Residues 100-120 (LVISMISGGLFCIGPILYGGM) traverse the membrane as a helical segment. Residues 121-137 (EMFPVAQQLYRHGKAYR) are Lumenal-facing. Residues 138-158 (FIFGFSAVSIMYLVLIISVQV) form a helical membrane-spanning segment. The Cytoplasmic segment spans residues 159–183 (HGWQIYYSKKLLDAWFTNTQDKKKK).

It belongs to the jagunal family.

It localises to the endoplasmic reticulum membrane. Its function is as follows. Endoplasmic reticulum transmembrane protein involved in vesicle-mediated transport, which is required for neutrophil function. The sequence is that of Protein jagunal homolog 1-B (jagn1b) from Danio rerio (Zebrafish).